Reading from the N-terminus, the 454-residue chain is NEDD8-activating enzyme E1 catalytic subunit (454 aa).

A2 is modified (N-acetylalanine). 56–80 (GLGCELLKDLALSGFRNLEVIDMDR) is a binding site for ATP. The active-site Glycyl thioester intermediate is C215.

This sequence belongs to the ubiquitin-activating E1 family. UBA3 subfamily. In terms of assembly, heterodimer of UBA3/ECR1 and AXR1. Interacts with NEDD8 and RCE1. Expressed in shoot, root and floral meristems, in vascular tissues of cotyledons and mature leaves, and in the stele of the root.

The protein localises to the nucleus. It catalyses the reaction ATP + [NEDD8 protein] + [E1 NEDD8-activating enzyme]-L-cysteine = AMP + diphosphate + [E1 NEDD8-activating enzyme]-S-[NEDD8 protein]-yl-L-cysteine.. It participates in protein modification; protein neddylation. Its function is as follows. Catalytic subunit of the dimeric ECR1-AXR1 E1 enzyme. E1 activates NEDD8/RUB1 by first adenylating its C-terminal glycine residue with ATP, thereafter linking this residue to the side chain of the catalytic cysteine, yielding a NEDD8-ECR1 thioester and free AMP. E1 finally transfers NEDD8 to the catalytic cysteine of RCE1. The polypeptide is NEDD8-activating enzyme E1 catalytic subunit (ECR1) (Arabidopsis thaliana (Mouse-ear cress)).